A 317-amino-acid polypeptide reads, in one-letter code: Peptidyl-prolyl cis-trans isomerase CYP26-2, chloroplastic (317 aa).

Residues 1–37 (MMQPNAKLLSPSAKFLPSPIEPPQHNRRTTVGAPPSL) are disordered. One can recognise a PPIase cyclophilin-type domain in the interval 95 to 311 (FIDVSIDGEP…SKVVVTNCGL (217 aa)).

The protein belongs to the cyclophilin-type PPIase family. As to expression, ubiquitous. Lower levels of expression in roots.

The protein localises to the plastid. It is found in the chloroplast thylakoid. It catalyses the reaction [protein]-peptidylproline (omega=180) = [protein]-peptidylproline (omega=0). Functionally, PPIases accelerate the folding of proteins. It catalyzes the cis-trans isomerization of proline imidic peptide bonds in oligopeptides. In Arabidopsis thaliana (Mouse-ear cress), this protein is Peptidyl-prolyl cis-trans isomerase CYP26-2, chloroplastic (CYP26-2).